A 450-amino-acid chain; its full sequence is Tubulin alpha-4 chain (450 aa).

Gln11 is a binding site for GTP. Lys40 is subject to N6-acetyllysine. Positions 71, 144, 145, 179, 206, and 228 each coordinate GTP. A Mg(2+)-binding site is contributed by Glu71. The active site involves Glu254. A disordered region spans residues 431-450; it reads DYEEVGAESGEGDEGDEEEY.

Belongs to the tubulin family. As to quaternary structure, dimer of alpha and beta chains. A typical microtubule is a hollow water-filled tube with an outer diameter of 25 nm and an inner diameter of 15 nM. Alpha-beta heterodimers associate head-to-tail to form protofilaments running lengthwise along the microtubule wall with the beta-tubulin subunit facing the microtubule plus end conferring a structural polarity. Microtubules usually have 13 protofilaments but different protofilament numbers can be found in some organisms and specialized cells. Mg(2+) serves as cofactor. Post-translationally, undergoes a tyrosination/detyrosination cycle, the cyclic removal and re-addition of a C-terminal tyrosine residue by the enzymes tubulin tyrosine carboxypeptidase (TTCP) and tubulin tyrosine ligase (TTL), respectively. In terms of processing, acetylation of alpha chains at Lys-40 stabilizes microtubules and affects affinity and processivity of microtubule motors. This modification has a role in multiple cellular functions, ranging from cell motility, cell cycle progression or cell differentiation to intracellular trafficking and signaling.

It localises to the cytoplasm. The protein localises to the cytoskeleton. It catalyses the reaction GTP + H2O = GDP + phosphate + H(+). Its function is as follows. Tubulin is the major constituent of microtubules, a cylinder consisting of laterally associated linear protofilaments composed of alpha- and beta-tubulin heterodimers. Microtubules grow by the addition of GTP-tubulin dimers to the microtubule end, where a stabilizing cap forms. Below the cap, tubulin dimers are in GDP-bound state, owing to GTPase activity of alpha-tubulin. This chain is Tubulin alpha-4 chain, found in Gossypium hirsutum (Upland cotton).